The chain runs to 377 residues: Putative zinc metalloprotease Atu1380 (377 aa).

Residue His29 participates in Zn(2+) binding. Glu30 is a catalytic residue. His33 is a Zn(2+) binding site. 3 helical membrane passes run 118 to 140 (VAAG…FGIY), 299 to 321 (LGIS…LNLM), and 351 to 373 (VAFR…NDIS). The PDZ domain occupies 129 to 202 (AILIFAVLFG…TPITVTVERA (74 aa)).

This sequence belongs to the peptidase M50B family. Zn(2+) is required as a cofactor.

The protein localises to the cell inner membrane. This is Putative zinc metalloprotease Atu1380 from Agrobacterium fabrum (strain C58 / ATCC 33970) (Agrobacterium tumefaciens (strain C58)).